The primary structure comprises 692 residues: Elongation factor G (692 aa).

One can recognise a tr-type G domain in the interval 8–283 (DRYRNIGIMA…AVVDFLPSPL (276 aa)). Residues 17 to 24 (AHIDAGKT), 81 to 85 (DTPGH), and 135 to 138 (NKMD) contribute to the GTP site.

Belongs to the TRAFAC class translation factor GTPase superfamily. Classic translation factor GTPase family. EF-G/EF-2 subfamily.

It localises to the cytoplasm. In terms of biological role, catalyzes the GTP-dependent ribosomal translocation step during translation elongation. During this step, the ribosome changes from the pre-translocational (PRE) to the post-translocational (POST) state as the newly formed A-site-bound peptidyl-tRNA and P-site-bound deacylated tRNA move to the P and E sites, respectively. Catalyzes the coordinated movement of the two tRNA molecules, the mRNA and conformational changes in the ribosome. In Rhodospirillum rubrum (strain ATCC 11170 / ATH 1.1.1 / DSM 467 / LMG 4362 / NCIMB 8255 / S1), this protein is Elongation factor G.